An 87-amino-acid chain; its full sequence is Small ribosomal subunit protein bS18B (87 aa).

Belongs to the bacterial ribosomal protein bS18 family. In terms of assembly, part of the 30S ribosomal subunit. Forms a tight heterodimer with protein bS6.

Functionally, binds as a heterodimer with protein bS6 to the central domain of the 16S rRNA, where it helps stabilize the platform of the 30S subunit. The protein is Small ribosomal subunit protein bS18B of Mycobacterium marinum (strain ATCC BAA-535 / M).